The following is a 728-amino-acid chain: Putative auxin response factor 20 (728 aa).

Positions 119–233 (FFEKQLSPAD…ELLVGVRRAP (115 aa)) form a DNA-binding region, TF-B3 1. 2 stretches are compositionally biased toward low complexity: residues 665–689 (PQGSDEEAAAATTSTAHAGDATTSA) and 700–712 (ASSSSSSAPIIPS). The tract at residues 665 to 728 (PQGSDEEAAA…IVNPRDGSQG (64 aa)) is disordered.

This sequence belongs to the ARF family. In terms of assembly, homo and heterodimers.

It is found in the nucleus. Auxin response factors (ARFs) are transcriptional factors that bind specifically to the DNA sequence 5'-TGTCTC-3' found in the auxin-responsive promoter elements (AuxREs). This is Putative auxin response factor 20 (ARF20) from Oryza sativa subsp. japonica (Rice).